The chain runs to 172 residues: Ribosome maturation factor RimM (172 aa).

A PRC barrel domain is found at aspartate 93–methionine 167.

It belongs to the RimM family. In terms of assembly, binds ribosomal protein uS19.

It localises to the cytoplasm. An accessory protein needed during the final step in the assembly of 30S ribosomal subunit, possibly for assembly of the head region. Essential for efficient processing of 16S rRNA. May be needed both before and after RbfA during the maturation of 16S rRNA. It has affinity for free ribosomal 30S subunits but not for 70S ribosomes. The sequence is that of Ribosome maturation factor RimM from Exiguobacterium sp. (strain ATCC BAA-1283 / AT1b).